Reading from the N-terminus, the 406-residue chain is Oligouridylate-binding protein 1 (406 aa).

RRM domains are found at residues 49 to 123 (RSVY…WAYA) and 134 to 212 (YNIF…WAAK). Residues 231-250 (TSGTSDDGQEKVVNEDAPEN) form a disordered region. The RRM 3 domain occupies 255 to 329 (TTVYVGNLAP…KPVKCSWGSK (75 aa)).

The protein resides in the nucleus. Functionally, heterogeneous nuclear ribonucleoprotein (hnRNP)-like protein that acts as a component of the pre-mRNA processing machinery. Functions to facilitate the nuclear maturation of plant pre-mRNAs. Binds with high affinity to RNA molecules that contain AU-rich regions. May bind to the 3'-UTR and protects the mRNA against exonucleolytic degradation. Associates with nuclear poly(A)+ RNA in nucleus in vivo. Does not stimulate transcription or the 3' end cleavage/polyadenylation reaction. The protein is Oligouridylate-binding protein 1 (UBP1) of Nicotiana plumbaginifolia (Leadwort-leaved tobacco).